Here is a 127-residue protein sequence, read N- to C-terminus: Phosphoribosyl-AMP cyclohydrolase (127 aa).

Mg(2+) is bound at residue aspartate 83. Cysteine 84 contributes to the Zn(2+) binding site. 2 residues coordinate Mg(2+): aspartate 85 and aspartate 87. Residues cysteine 100 and cysteine 107 each coordinate Zn(2+).

Belongs to the PRA-CH family. As to quaternary structure, homodimer. The cofactor is Mg(2+). Zn(2+) serves as cofactor.

Its subcellular location is the cytoplasm. The catalysed reaction is 1-(5-phospho-beta-D-ribosyl)-5'-AMP + H2O = 1-(5-phospho-beta-D-ribosyl)-5-[(5-phospho-beta-D-ribosylamino)methylideneamino]imidazole-4-carboxamide. Its pathway is amino-acid biosynthesis; L-histidine biosynthesis; L-histidine from 5-phospho-alpha-D-ribose 1-diphosphate: step 3/9. Functionally, catalyzes the hydrolysis of the adenine ring of phosphoribosyl-AMP. The sequence is that of Phosphoribosyl-AMP cyclohydrolase from Methanocaldococcus jannaschii (strain ATCC 43067 / DSM 2661 / JAL-1 / JCM 10045 / NBRC 100440) (Methanococcus jannaschii).